The following is a 354-amino-acid chain: UPF0283 membrane protein HI_0043 (354 aa).

3 helical membrane-spanning segments follow: residues 57–77 (LLKF…VQWI), 87–107 (IYLA…KEII), and 211–231 (ESAV…FIAW).

The protein belongs to the UPF0283 family.

Its subcellular location is the cell inner membrane. The protein is UPF0283 membrane protein HI_0043 of Haemophilus influenzae (strain ATCC 51907 / DSM 11121 / KW20 / Rd).